A 181-amino-acid polypeptide reads, in one-letter code: Crossover junction endodeoxyribonuclease RuvC (181 aa).

Active-site residues include Asp-7, Glu-67, and Asp-139. Mg(2+) is bound by residues Asp-7, Glu-67, and Asp-139.

This sequence belongs to the RuvC family. As to quaternary structure, homodimer which binds Holliday junction (HJ) DNA. The HJ becomes 2-fold symmetrical on binding to RuvC with unstacked arms; it has a different conformation from HJ DNA in complex with RuvA. In the full resolvosome a probable DNA-RuvA(4)-RuvB(12)-RuvC(2) complex forms which resolves the HJ. It depends on Mg(2+) as a cofactor.

The protein localises to the cytoplasm. The enzyme catalyses Endonucleolytic cleavage at a junction such as a reciprocal single-stranded crossover between two homologous DNA duplexes (Holliday junction).. Its function is as follows. The RuvA-RuvB-RuvC complex processes Holliday junction (HJ) DNA during genetic recombination and DNA repair. Endonuclease that resolves HJ intermediates. Cleaves cruciform DNA by making single-stranded nicks across the HJ at symmetrical positions within the homologous arms, yielding a 5'-phosphate and a 3'-hydroxyl group; requires a central core of homology in the junction. The consensus cleavage sequence is 5'-(A/T)TT(C/G)-3'. Cleavage occurs on the 3'-side of the TT dinucleotide at the point of strand exchange. HJ branch migration catalyzed by RuvA-RuvB allows RuvC to scan DNA until it finds its consensus sequence, where it cleaves and resolves the cruciform DNA. The protein is Crossover junction endodeoxyribonuclease RuvC of Cupriavidus necator (strain ATCC 17699 / DSM 428 / KCTC 22496 / NCIMB 10442 / H16 / Stanier 337) (Ralstonia eutropha).